The sequence spans 101 residues: MYAIVKTGGKQYKVAEGDLVKVEKIEGEPGASVALTPVLLVDGADVTTAADKLASVSVNTEIVEHTKGPKIKILKYKNKTGYKKRQGHRQPLTVLKVTGIK.

Belongs to the bacterial ribosomal protein bL21 family. In terms of assembly, part of the 50S ribosomal subunit. Contacts protein L20.

In terms of biological role, this protein binds to 23S rRNA in the presence of protein L20. In Corynebacterium glutamicum (strain R), this protein is Large ribosomal subunit protein bL21.